A 247-amino-acid polypeptide reads, in one-letter code: 2-dehydro-3-deoxy-phosphogluconate aldolase (247 aa).

It belongs to the DagF family.

It carries out the reaction 2-dehydro-3-deoxy-6-phospho-D-gluconate = D-glyceraldehyde 3-phosphate + pyruvate. In terms of biological role, involved in the catabolism of D-glucosaminate. Catalyzes the conversion of keto-3-deoxygluconate 6-phosphate (KDGP) to yield pyruvate and glyceraldehyde-3-phosphate. This Salmonella typhimurium (strain 14028s / SGSC 2262) protein is 2-dehydro-3-deoxy-phosphogluconate aldolase.